The sequence spans 294 residues: Urease accessory protein UreD 1 (294 aa).

The interval 1 to 22 (MALSLDGLPEKPAPAEAPSPPV) is disordered. Residues 11 to 21 (KPAPAEAPSPP) show a composition bias toward pro residues.

Belongs to the UreD family. As to quaternary structure, ureD, UreF and UreG form a complex that acts as a GTP-hydrolysis-dependent molecular chaperone, activating the urease apoprotein by helping to assemble the nickel containing metallocenter of UreC. The UreE protein probably delivers the nickel.

It is found in the cytoplasm. Functionally, required for maturation of urease via the functional incorporation of the urease nickel metallocenter. In Methylorubrum extorquens (strain PA1) (Methylobacterium extorquens), this protein is Urease accessory protein UreD 1.